The sequence spans 620 residues: Glutathione-regulated potassium-efflux system protein KefC (620 aa).

A run of 12 helical transmembrane segments spans residues His-4 to Val-24, Leu-26 to Leu-46, Ser-54 to Leu-74, Gly-90 to Leu-110, Val-114 to Met-134, Phe-149 to Leu-169, Leu-178 to Leu-198, Val-218 to Gly-238, Gly-270 to Val-290, Leu-294 to Val-314, Trp-327 to Gln-347, and Ala-359 to Thr-379. The 120-residue stretch at Gln-399–Thr-518 folds into the RCK N-terminal domain. The interval Gln-599–Ile-620 is disordered.

This sequence belongs to the monovalent cation:proton antiporter 2 (CPA2) transporter (TC 2.A.37) family. KefC subfamily. In terms of assembly, homodimer. Interacts with the regulatory subunit KefF.

It localises to the cell inner membrane. Its function is as follows. Pore-forming subunit of a potassium efflux system that confers protection against electrophiles. Catalyzes K(+)/H(+) antiport. The sequence is that of Glutathione-regulated potassium-efflux system protein KefC from Salmonella agona (strain SL483).